We begin with the raw amino-acid sequence, 607 residues long: UvrABC system protein C (607 aa).

Residues 16 to 94 (GRPGVYRMFD…IKEWRPPYNI (79 aa)) form the GIY-YIG domain. Residues 203–238 (NALSDELNATMEKAAMALDFERAAELRDQVALLRRV) form the UVR domain.

The protein belongs to the UvrC family. As to quaternary structure, interacts with UvrB in an incision complex.

It is found in the cytoplasm. The UvrABC repair system catalyzes the recognition and processing of DNA lesions. UvrC both incises the 5' and 3' sides of the lesion. The N-terminal half is responsible for the 3' incision and the C-terminal half is responsible for the 5' incision. The polypeptide is UvrABC system protein C (Pseudomonas savastanoi pv. phaseolicola (strain 1448A / Race 6) (Pseudomonas syringae pv. phaseolicola (strain 1448A / Race 6))).